A 340-amino-acid chain; its full sequence is Central glycolytic genes regulator (340 aa).

Residues 37 to 56 (RRSLSASLGISERVLRGEVQ) constitute a DNA-binding region (H-T-H motif). Beta-D-fructose 1,6-bisphosphate-binding positions include 149-152 (GGTT), arginine 175, glutamine 185, 250-251 (RR), glutamate 269, and lysine 310.

This sequence belongs to the SorC transcriptional regulatory family. In terms of assembly, homotetramer. Binds primarily as a dimer to each half-site of the full-length operator, with much higher affinity for the right site. Then, both dimers interact, bridging the two-half sites of the operator region.

Its activity is regulated as follows. Stability and function are regulated by the effector molecule fructose-1,6-bisphosphate (FBP). In the presence of glucose, binding of FBP to the low-affinity sugar-binding site of CggR disrupts dimer/dimer bridging interactions and triggers a tetramer to dimer transition, which leaves two physically independent dimers on the target DNA and allows transcription of the downstream coding sequences by the RNA polymerase. In addition, FBP and several other phosphorylated compounds can bind to a high-affinity binding-site and protect CggR against aggregation and proteolysis. In the absence of glucose, represses the transcription of the gapA operon, which encodes five key glycolytic enzymes. Binds specifically to the cggR-gapA promoter region and blocks the progression of the RNA polymerase, leading to the arrest of the transcription. The sequence is that of Central glycolytic genes regulator (cggR) from Bacillus subtilis (strain 168).